The sequence spans 741 residues: NAD(P)H-quinone oxidoreductase subunit 5, chloroplastic (741 aa).

Transmembrane regions (helical) follow at residues 9-29, 39-59, 89-109, 125-145, 147-167, 184-204, 216-238, 258-278, 280-300, 327-347, 354-374, 396-416, 425-445, 544-564, 612-632, and 721-741; these read WVIP…LFLI, IWAF…VQLS, IDPL…LVLI, FIYI…SNLI, IYFF…FWFT, IGDF…GSLE, IPNN…LGAV, TPIS…FLLA, LLPL…VGTI, LGYM…FHLI, ALLF…VGYS, TAFL…CFWS, WLYS…TAFY, LFPL…GIPF, SLVI…YSFF, and ISSY…FFLS.

The protein belongs to the complex I subunit 5 family. As to quaternary structure, NDH is composed of at least 16 different subunits, 5 of which are encoded in the nucleus.

The protein localises to the plastid. It localises to the chloroplast thylakoid membrane. It carries out the reaction a plastoquinone + NADH + (n+1) H(+)(in) = a plastoquinol + NAD(+) + n H(+)(out). The enzyme catalyses a plastoquinone + NADPH + (n+1) H(+)(in) = a plastoquinol + NADP(+) + n H(+)(out). Its function is as follows. NDH shuttles electrons from NAD(P)H:plastoquinone, via FMN and iron-sulfur (Fe-S) centers, to quinones in the photosynthetic chain and possibly in a chloroplast respiratory chain. The immediate electron acceptor for the enzyme in this species is believed to be plastoquinone. Couples the redox reaction to proton translocation, and thus conserves the redox energy in a proton gradient. This Brachypodium distachyon (Purple false brome) protein is NAD(P)H-quinone oxidoreductase subunit 5, chloroplastic (ndhF).